A 209-amino-acid chain; its full sequence is Small ribosomal subunit protein uS3 (209 aa).

In terms of domain architecture, KH type-2 spans Ile17–Lys86.

It belongs to the universal ribosomal protein uS3 family. In terms of assembly, part of the 30S ribosomal subunit.

In terms of biological role, binds the lower part of the 30S subunit head. This Thermococcus gammatolerans (strain DSM 15229 / JCM 11827 / EJ3) protein is Small ribosomal subunit protein uS3.